A 258-amino-acid polypeptide reads, in one-letter code: Type III pantothenate kinase (258 aa).

ATP is bound at residue 12–19 (DIGNTSIA). Substrate is bound by residues Tyr94 and 109-112 (GSDV). The Proton acceptor role is filled by Asp111. Asp132 lines the K(+) pocket. Thr135 is a binding site for ATP. Position 187 (Thr187) interacts with substrate.

Belongs to the type III pantothenate kinase family. In terms of assembly, homodimer. Requires NH4(+) as cofactor. It depends on K(+) as a cofactor.

It is found in the cytoplasm. It catalyses the reaction (R)-pantothenate + ATP = (R)-4'-phosphopantothenate + ADP + H(+). The protein operates within cofactor biosynthesis; coenzyme A biosynthesis; CoA from (R)-pantothenate: step 1/5. Functionally, catalyzes the phosphorylation of pantothenate (Pan), the first step in CoA biosynthesis. In Borreliella afzelii (strain PKo) (Borrelia afzelii), this protein is Type III pantothenate kinase.